Reading from the N-terminus, the 430-residue chain is Trigger factor (430 aa).

Positions 157–242 constitute a PPIase FKBP-type domain; sequence GDLVALETWS…AVEVSEPVLP (86 aa).

The protein belongs to the FKBP-type PPIase family. Tig subfamily.

The protein localises to the cytoplasm. The catalysed reaction is [protein]-peptidylproline (omega=180) = [protein]-peptidylproline (omega=0). In terms of biological role, involved in protein export. Acts as a chaperone by maintaining the newly synthesized protein in an open conformation. Functions as a peptidyl-prolyl cis-trans isomerase. This chain is Trigger factor, found in Xanthomonas campestris pv. campestris (strain ATCC 33913 / DSM 3586 / NCPPB 528 / LMG 568 / P 25).